We begin with the raw amino-acid sequence, 599 residues long: Kelch-like protein 24a (599 aa).

The 68-residue stretch at 65 to 132 (TDVIISVQGR…VYTGRACITT (68 aa)) folds into the BTB domain. One can recognise a BACK domain in the interval 167–269 (CLGIQRFADA…HPNYFVQTVE (103 aa)). Kelch repeat units follow at residues 313-362 (VIVV…ALRN), 364-406 (IILS…VLLG), 407-453 (KVYA…SCAG), 455-501 (LFVI…SLNH), 503-543 (IYVC…VCNG), and 545-591 (IYIL…TVHR).

As to quaternary structure, forms homodimers. Component of the BCR(KLHL24) E3 ubiquitin ligase complex.

The protein localises to the perikaryon. It localises to the cell projection. The protein resides in the axon. Its subcellular location is the cytoplasm. It is found in the cell junction. The protein localises to the desmosome. It localises to the adherens junction. In terms of biological role, necessary to maintain the balance between intermediate filament stability and degradation, a process that is essential for skin integrity. Reduces kainate receptor-mediated currents in brain neurons, most probably by modulating channel properties. It is required for proper heart development. The protein is Kelch-like protein 24a of Danio rerio (Zebrafish).